Here is a 546-residue protein sequence, read N- to C-terminus: Low-affinity methionine permease (546 aa).

Residues 1 to 70 lie on the Extracellular side of the membrane; that stretch reads MEPLLFNSGK…QGRHLGVFST (70 aa). The helical transmembrane segment at 71–91 threads the bilayer; the sequence is VVLFVSRIMGSGIFAVPSVIL. At 92–98 the chain is on the cytoplasmic side; sequence LNTGGNK. A helical membrane pass occupies residues 99–119; the sequence is LIYFAIWVFSAAIAFAGLYLF. Over 120 to 148 the chain is Extracellular; it reads LEFGSWIPKSGGRKNFLERSFERPRLLIS. Residues 149–169 form a helical membrane-spanning segment; sequence VVFSCYSVLTGYALTGSIVFG. The Cytoplasmic segment spans residues 170–188; the sequence is KYVLSAFGVTDDSWSKYVS. A helical membrane pass occupies residues 189–209; the sequence is ISFIIFAVLIHGVSVRHGVFI. Over 210–213 the chain is Extracellular; sequence QNAL. Residues 214–234 form a helical membrane-spanning segment; the sequence is GGLKLIMIVLMCFAGLYTLFF. Residues 235 to 254 lie on the Cytoplasmic side of the membrane; the sequence is YKSTGQVAWDLPVTQVEKDS. Residues 255 to 275 traverse the membrane as a helical segment; sequence LLSVSSIATAFISSFFCFSGW. The Extracellular segment spans residues 276-297; that stretch reads DTVHTVTSEIKNPVKTLKVSGP. The chain crosses the membrane as a helical span at residues 298–318; sequence LSLIICFVCYTMMNVAYLKVL. A topological domain (cytoplasmic) is located at residue threonine 319. A helical transmembrane segment spans residues 320–340; that stretch reads YEEIVSAGPLVGSVLFTKLFG. The Extracellular segment spans residues 341 to 346; sequence PRVGGK. A helical transmembrane segment spans residues 347 to 367; sequence FIAFSIAISAASNILVVIYSI. The Cytoplasmic portion of the chain corresponds to 368–393; sequence SRVNQEIFKEGYLPFSIHMSKNWPFD. A helical transmembrane segment spans residues 394 to 414; sequence APLPSISLCGFITIAWILILP. The Extracellular segment spans residues 415–423; the sequence is KEGESFNYL. The chain crosses the membrane as a helical span at residues 424–444; it reads VSMDGYGNQFFLLLVAIGLFI. The Cytoplasmic portion of the chain corresponds to 445 to 459; the sequence is WRFKHKNEVPEIRAS. The chain crosses the membrane as a helical span at residues 460-480; that stretch reads TFGVLAIITLSLYMLMAPFFA. The Extracellular portion of the chain corresponds to 481–494; that stretch reads DPSLNRVGFLPPYQ. A helical transmembrane segment spans residues 495 to 515; sequence IMSLLVIVACFFFWLVKFVLL. Topologically, residues 516-546 are cytoplasmic; the sequence is PKFFHYKLLPKITYLHDGLIVTEWVKKPCLC.

It to yeast high affinity methionine permease (MUP1).

The protein resides in the membrane. Its function is as follows. Very low affinity permease for methionine. This Saccharomyces cerevisiae (strain ATCC 204508 / S288c) (Baker's yeast) protein is Low-affinity methionine permease (MUP3).